The following is a 169-amino-acid chain: General odorant-binding protein 57a (169 aa).

An N-terminal signal peptide occupies residues 1 to 20 (MFNTRLAIFLLLIVVSLSQA). 3 cysteine pairs are disulfide-bonded: Cys-39-Cys-77, Cys-73-Cys-120, and Cys-111-Cys-129.

The protein belongs to the PBP/GOBP family.

Its function is as follows. Present in the aqueous fluid surrounding olfactory sensory dendrites and are thought to aid in the capture and transport of hydrophobic odorants into and through this fluid. This Drosophila melanogaster (Fruit fly) protein is General odorant-binding protein 57a.